Here is a 104-residue protein sequence, read N- to C-terminus: Large ribosomal subunit protein eL31 (104 aa).

Belongs to the eukaryotic ribosomal protein eL31 family.

The polypeptide is Large ribosomal subunit protein eL31 (rpl31e) (Aeropyrum pernix (strain ATCC 700893 / DSM 11879 / JCM 9820 / NBRC 100138 / K1)).